Reading from the N-terminus, the 1024-residue chain is Beta-galactosidase (1024 aa).

Substrate is bound by residues Asn-103 and Asp-202. Position 202 (Asp-202) interacts with Na(+). Mg(2+) is bound by residues Glu-417, His-419, and Glu-462. Residues Glu-462 and 538-541 each bind substrate; that span reads EYAH. Glu-462 acts as the Proton donor in catalysis. Catalysis depends on Glu-538, which acts as the Nucleophile. Residue Asn-598 coordinates Mg(2+). Residues Phe-602 and Asn-605 each contribute to the Na(+) site. 2 residues coordinate substrate: Asn-605 and Trp-1000.

This sequence belongs to the glycosyl hydrolase 2 family. In terms of assembly, homotetramer. Mg(2+) serves as cofactor. The cofactor is Mn(2+). Na(+) is required as a cofactor.

It catalyses the reaction Hydrolysis of terminal non-reducing beta-D-galactose residues in beta-D-galactosides.. Inhibited by phenylethyl thio-beta-D-galactoside (PETG), isopropyl thio-beta-D-galactoside (IPTG), L-ribose, D-galactonolactone, lactose and 2-amino-D-galactose. The protein is Beta-galactosidase (lacZ) of Escherichia coli (strain K12).